Reading from the N-terminus, the 1167-residue chain is Phenyloxazoline synthase MbtB (1167 aa).

In terms of domain architecture, Carrier 1 spans 2 to 78 (EAVVTSSQTV…AWTRLVGERT (77 aa)). S39 is subject to O-(pantetheine 4'-phosphoryl)serine. Residues 78–100 (TAESPGAATQSGDTAASAGDPDA) form a disordered region. The tract at residues 98 to 390 (PDAPFPLAPI…SSLMLDVDFT (293 aa)) is condensation/cyclization. The adenylation stretch occupies residues 575 to 967 (TYAELRERVL…RIAGVEAAVA (393 aa)). Residues 1054–1130 (VPSTALERAL…ALARRLVDHE (77 aa)) enclose the Carrier 2 domain. At S1089 the chain carries O-(pantetheine 4'-phosphoryl)serine.

It belongs to the ATP-dependent AMP-binding enzyme family. MbtB subfamily. Pantetheine 4'-phosphate is required as a cofactor. 4'-phosphopantetheine is transferred from CoA to a specific serine in each of the two carrier protein domains, leading to their activation from apo to holo forms.

Its pathway is siderophore biosynthesis; mycobactin biosynthesis. Involved in the initial steps of the mycobactin biosynthetic pathway. Putatively couples activated salicylic acid with serine or threonine and cyclizes this precursor to the hydroxyphenyloxazoline ring system present in this class of siderophores. This chain is Phenyloxazoline synthase MbtB (mbtB), found in Mycobacterium sp. (strain MCS).